The chain runs to 461 residues: Inositol-trisphosphate 3-kinase A (461 aa).

The interval Met-1–Arg-29 is disordered. The segment at Met-1–Leu-133 is required for cytoskeleton location. Residues Arg-35, Arg-55, and Arg-62 each carry the omega-N-methylarginine modification. The tract at residues Ala-49 to Asp-160 is disordered. Residues Arg-118 to Leu-134 show a composition bias toward low complexity. A phosphoserine mark is found at Ser-137 and Ser-197. ATP contacts are provided by residues Ser-197, Lys-209, Gln-249–Leu-251, and Asp-262. Substrate contacts are provided by Lys-264 and Arg-285. Residues Asp-287 to Val-295 form a calmodulin-binding region. Position 312 to 319 (Lys-312 to Arg-319) interacts with substrate. Residues Lys-336 and Asp-416 each coordinate ATP. Residue Lys-419 participates in substrate binding.

The protein belongs to the inositol phosphokinase (IPK) family. Expressed in brain.

Its subcellular location is the cytoplasm. The protein resides in the cytoskeleton. The enzyme catalyses 1D-myo-inositol 1,4,5-trisphosphate + ATP = 1D-myo-inositol 1,3,4,5-tetrakisphosphate + ADP + H(+). Its activity is regulated as follows. Activated by calcium/calmodulin. Its function is as follows. Catalyzes the phosphorylation of 1D-myo-inositol 1,4,5-trisphosphate (InsP3) into 1D-myo-inositol 1,3,4,5-tetrakisphosphate and participates to the regulation of calcium homeostasis. The protein is Inositol-trisphosphate 3-kinase A of Homo sapiens (Human).